The primary structure comprises 51 residues: Insulin (51 aa).

3 disulfide bridges follow: C8/C37, C20/C50, and C36/C41.

The protein belongs to the insulin family. Heterodimer of a B chain and an A chain linked by two disulfide bonds.

It localises to the secreted. Insulin decreases blood glucose concentration. It increases cell permeability to monosaccharides, amino acids and fatty acids. It accelerates glycolysis, the pentose phosphate cycle, and glycogen synthesis in liver. This Gadus morhua subsp. callarias (Baltic cod) protein is Insulin (ins).